We begin with the raw amino-acid sequence, 214 residues long: Pyridoxine/pyridoxamine 5'-phosphate oxidase (214 aa).

Substrate-binding positions include 8 to 11 (RTNY) and K66. Residues 61 to 66 (RIVLIK), 76 to 77 (FT), R82, K83, and Q105 contribute to the FMN site. Substrate contacts are provided by Y123, R127, and S131. FMN contacts are provided by residues 140–141 (QS) and W184. Position 190–192 (190–192 (RLH)) interacts with substrate. R194 lines the FMN pocket.

It belongs to the pyridoxamine 5'-phosphate oxidase family. In terms of assembly, homodimer. FMN is required as a cofactor.

It catalyses the reaction pyridoxamine 5'-phosphate + O2 + H2O = pyridoxal 5'-phosphate + H2O2 + NH4(+). The catalysed reaction is pyridoxine 5'-phosphate + O2 = pyridoxal 5'-phosphate + H2O2. Its pathway is cofactor metabolism; pyridoxal 5'-phosphate salvage; pyridoxal 5'-phosphate from pyridoxamine 5'-phosphate: step 1/1. It functions in the pathway cofactor metabolism; pyridoxal 5'-phosphate salvage; pyridoxal 5'-phosphate from pyridoxine 5'-phosphate: step 1/1. Functionally, catalyzes the oxidation of either pyridoxine 5'-phosphate (PNP) or pyridoxamine 5'-phosphate (PMP) into pyridoxal 5'-phosphate (PLP). The chain is Pyridoxine/pyridoxamine 5'-phosphate oxidase from Burkholderia thailandensis (strain ATCC 700388 / DSM 13276 / CCUG 48851 / CIP 106301 / E264).